The sequence spans 77 residues: Apidermin 2 (77 aa).

An N-terminal signal peptide occupies residues 1-16; that stretch reads MKSLLILFAIVAVVAA.

In terms of tissue distribution, expressed in the epidermis, hypopharyngeal glands, fat body, trachea, esophagus and stomach.

It is found in the secreted. Its function is as follows. Antimicrobial peptide that binds cell wall carbohydrates of microbial symbionts and induces structural damage. Binds the cell wall carbohydrates mannan, N-acetyl-D-glucosamine and lipopolysaccharide. Can target fungi, Gram-negative and Gram-positive bacteria. This Apis mellifera (Honeybee) protein is Apidermin 2.